The chain runs to 161 residues: Globin CTT-IX (161 aa).

A signal peptide spans 1 to 16 (MKFFIVLALCIVGAIA). The 144-residue stretch at 18-161 (PVSSDQANAI…NIFGMIFAHL (144 aa)) folds into the Globin domain. H76 and H111 together coordinate heme b.

The protein belongs to the globin family. As to quaternary structure, homodimer.

This Chironomus thummi thummi (Midge) protein is Globin CTT-IX (CTT-9).